We begin with the raw amino-acid sequence, 528 residues long: Cytochrome P450 monooxygenase polB (528 aa).

Residues 3–23 (SFFLVCPVAFLGFTICYLVYV) traverse the membrane as a helical segment. Cysteine 473 provides a ligand contact to heme.

The protein belongs to the cytochrome P450 family. It depends on heme as a cofactor.

The protein resides in the membrane. The catalysed reaction is 4beta-carboxyl motiol + reduced [NADPH--hemoprotein reductase] + O2 = 2alpha-hydroxyl, 4beta-carboxyl motiol + oxidized [NADPH--hemoprotein reductase] + H2O + H(+). It catalyses the reaction 2-deoxypolytolypin + reduced [NADPH--hemoprotein reductase] + O2 = polytolypin + oxidized [NADPH--hemoprotein reductase] + H2O + H(+). The protein operates within secondary metabolite biosynthesis; terpenoid biosynthesis. Its function is as follows. Cytochrome P450 monooxygenase; part of the gene cluster that mediates the biosynthesis of antifungal fernane-type triterpenoid polytolypin. PolB acts as a hydroxylase and installs the 2-alpha-hydroxyl group in polytolypin. Within the pathway, the triterpene cyclase polA first catalyzes the cyclization of 2,3-oxidosqualene to motiol, polC converts the 4-alpha-methyl group of motiol to a carboxyl group, polB is responsible for appending a hydroxyl group at the 2-alpha position and polE is a dual functional P450, which can catalyze the formation of both the 1-beta-hydroxyl group and 10-beta-carboxyl group. This Polytolypa hystricis (strain UAMH7299) protein is Cytochrome P450 monooxygenase polB.